We begin with the raw amino-acid sequence, 343 residues long: 4-hydroxyproline 2-epimerase 1 (343 aa).

Ser90 acts as the Proton acceptor in catalysis. Residues 91 to 92 (GS), Asp251, and 256 to 257 (GT) contribute to the substrate site.

The protein belongs to the proline racemase family.

The enzyme catalyses trans-4-hydroxy-L-proline = cis-4-hydroxy-D-proline. In terms of biological role, catalyzes the epimerization of trans-4-hydroxy-L-proline (t4LHyp) to cis-4-hydroxy-D-proline (c4DHyp) in vitro, albeit with low efficiency. The physiological substrate may be different. Displays no proline racemase activity. The protein is 4-hydroxyproline 2-epimerase 1 of Brucella anthropi (strain ATCC 49188 / DSM 6882 / CCUG 24695 / JCM 21032 / LMG 3331 / NBRC 15819 / NCTC 12168 / Alc 37) (Ochrobactrum anthropi).